We begin with the raw amino-acid sequence, 321 residues long: Ferredoxin--NADP reductase (321 aa).

The FAD site is built by Asp-28, Gln-36, Tyr-41, Ala-81, Phe-115, Asp-274, and Ser-315.

This sequence belongs to the ferredoxin--NADP reductase type 2 family. As to quaternary structure, homodimer. FAD serves as cofactor.

It catalyses the reaction 2 reduced [2Fe-2S]-[ferredoxin] + NADP(+) + H(+) = 2 oxidized [2Fe-2S]-[ferredoxin] + NADPH. This is Ferredoxin--NADP reductase from Frankia alni (strain DSM 45986 / CECT 9034 / ACN14a).